Reading from the N-terminus, the 85-residue chain is Large ribosomal subunit protein bL27 (85 aa).

Residues 1-21 form a disordered region; the sequence is MAHKKGGGSTKNGRDSNPKYL.

It belongs to the bacterial ribosomal protein bL27 family.

In Chlorobium chlorochromatii (strain CaD3), this protein is Large ribosomal subunit protein bL27.